The following is a 148-amino-acid chain: Ubiquitin-conjugating enzyme E2 8 (148 aa).

In terms of domain architecture, UBC core spans Met-1–Met-147. The active-site Glycyl thioester intermediate is Cys-85.

It belongs to the ubiquitin-conjugating enzyme family. As to quaternary structure, interacts with CIP8, CHIP, NLA and XERICO. In terms of tissue distribution, highest expression in young stems, old leaves. Lowest levels in floral buds, anthers and young leaves.

The catalysed reaction is S-ubiquitinyl-[E1 ubiquitin-activating enzyme]-L-cysteine + [E2 ubiquitin-conjugating enzyme]-L-cysteine = [E1 ubiquitin-activating enzyme]-L-cysteine + S-ubiquitinyl-[E2 ubiquitin-conjugating enzyme]-L-cysteine.. The protein operates within protein modification; protein ubiquitination. Its function is as follows. Accepts the ubiquitin from the E1 complex and catalyzes its covalent attachment to other proteins. Mediates the selective degradation of short-lived and abnormal proteins. The chain is Ubiquitin-conjugating enzyme E2 8 (UBC8) from Arabidopsis thaliana (Mouse-ear cress).